A 225-amino-acid chain; its full sequence is PKHD-type hydroxylase YbiX (225 aa).

In terms of domain architecture, Fe2OG dioxygenase spans 78-177 (TLSTPLFNRY…RVASFMWIQS (100 aa)). Positions 96, 98, and 158 each coordinate Fe cation. Position 168 (Arg-168) interacts with 2-oxoglutarate.

It depends on Fe(2+) as a cofactor. L-ascorbate serves as cofactor.

In Shigella boydii serotype 4 (strain Sb227), this protein is PKHD-type hydroxylase YbiX.